The chain runs to 299 residues: ATP phosphoribosyltransferase (299 aa).

It belongs to the ATP phosphoribosyltransferase family. Long subfamily. Requires Mg(2+) as cofactor.

The protein localises to the cytoplasm. The catalysed reaction is 1-(5-phospho-beta-D-ribosyl)-ATP + diphosphate = 5-phospho-alpha-D-ribose 1-diphosphate + ATP. It participates in amino-acid biosynthesis; L-histidine biosynthesis; L-histidine from 5-phospho-alpha-D-ribose 1-diphosphate: step 1/9. Feedback inhibited by histidine. In terms of biological role, catalyzes the condensation of ATP and 5-phosphoribose 1-diphosphate to form N'-(5'-phosphoribosyl)-ATP (PR-ATP). Has a crucial role in the pathway because the rate of histidine biosynthesis seems to be controlled primarily by regulation of HisG enzymatic activity. This Shewanella woodyi (strain ATCC 51908 / MS32) protein is ATP phosphoribosyltransferase.